A 370-amino-acid polypeptide reads, in one-letter code: Anhydro-N-acetylmuramic acid kinase (370 aa).

13-20 (GTSMDGVD) is an ATP binding site.

This sequence belongs to the anhydro-N-acetylmuramic acid kinase family.

It catalyses the reaction 1,6-anhydro-N-acetyl-beta-muramate + ATP + H2O = N-acetyl-D-muramate 6-phosphate + ADP + H(+). Its pathway is amino-sugar metabolism; 1,6-anhydro-N-acetylmuramate degradation. The protein operates within cell wall biogenesis; peptidoglycan recycling. Its function is as follows. Catalyzes the specific phosphorylation of 1,6-anhydro-N-acetylmuramic acid (anhMurNAc) with the simultaneous cleavage of the 1,6-anhydro ring, generating MurNAc-6-P. Is required for the utilization of anhMurNAc either imported from the medium or derived from its own cell wall murein, and thus plays a role in cell wall recycling. The polypeptide is Anhydro-N-acetylmuramic acid kinase (Vibrio parahaemolyticus serotype O3:K6 (strain RIMD 2210633)).